Reading from the N-terminus, the 386-residue chain is Na(+)/H(+) antiporter NhaA (386 aa).

11 helical membrane passes run 11 to 31 (NDAT…FLAN), 60 to 80 (LLLW…GLEV), 96 to 116 (MFPL…YAAF), 126 to 146 (GWAI…ALLG), 155 to 175 (MFLM…IALF), 180 to 200 (LSLI…VLNG), 218 to 238 (VAVL…GLFI), 260 to 280 (VSWL…LSGV), 293 to 313 (ITLG…WLAV), 326 to 346 (LIDI…SIFI), and 358 to 378 (LVTL…LVGY).

The protein belongs to the NhaA Na(+)/H(+) (TC 2.A.33) antiporter family.

It is found in the cell inner membrane. It catalyses the reaction Na(+)(in) + 2 H(+)(out) = Na(+)(out) + 2 H(+)(in). In terms of biological role, na(+)/H(+) antiporter that extrudes sodium in exchange for external protons. In Erwinia tasmaniensis (strain DSM 17950 / CFBP 7177 / CIP 109463 / NCPPB 4357 / Et1/99), this protein is Na(+)/H(+) antiporter NhaA.